Reading from the N-terminus, the 148-residue chain is Protein TIFY 5B (148 aa).

One can recognise a Tify domain in the interval 54-89 (PKQESQILTIFYNGHMCVSSDLTHLEANAILSLASR).

The protein belongs to the TIFY/JAZ family. In terms of processing, ubiquitinated. Targeted for degradation by the SCF(COI1) E3 ubiquitin ligase-proteasome pathway during jasmonate signaling.

The protein resides in the nucleus. Its function is as follows. Repressor of jasmonate responses. This chain is Protein TIFY 5B (TIFY 5B), found in Arabidopsis thaliana (Mouse-ear cress).